Here is a 293-residue protein sequence, read N- to C-terminus: Methylsterol monooxygenase 1 (293 aa).

Helical transmembrane passes span 55 to 75 and 100 to 120; these read LIVH…FQFI and VLLF…YYFT. Residues 145-274 enclose the Fatty acid hydroxylase domain; it reads CAVIEDTWHY…FTWWDRIFGT (130 aa). The Histidine box-1 motif lies at 157–161; sequence HRLLH. Positions 170–174 match the Histidine box-2 motif; sequence HKVHH. Residues 199–219 traverse the membrane as a helical segment; it reads FFIGIVLLCDHVILLWAWVTI. The short motif at 249–255 is the Histidine box-3 element; that stretch reads HHDFHHM.

The protein belongs to the sterol desaturase family. It depends on Fe cation as a cofactor. Ubiquitinated by MARCHF6, leading to proteasomal degradation.

Its subcellular location is the endoplasmic reticulum membrane. It catalyses the reaction 4,4-dimethyl-5alpha-cholest-7-en-3beta-ol + 6 Fe(II)-[cytochrome b5] + 3 O2 + 5 H(+) = 4alpha-carboxy-4beta-methyl-5alpha-cholest-7-ene-3beta-ol + 6 Fe(III)-[cytochrome b5] + 4 H2O. The enzyme catalyses 4,4-dimethyl-5alpha-cholesta-8,24-dien-3beta-ol + 6 Fe(II)-[cytochrome b5] + 3 O2 + 5 H(+) = 4beta-methylzymosterol-4alpha-carboxylate + 6 Fe(III)-[cytochrome b5] + 4 H2O. It carries out the reaction 4alpha-methylzymosterol + 6 Fe(II)-[cytochrome b5] + 3 O2 + 5 H(+) = 4alpha-carboxyzymosterol + 6 Fe(III)-[cytochrome b5] + 4 H2O. The catalysed reaction is 4alpha-methyl-5alpha-cholest-7-en-3beta-ol + 6 Fe(II)-[cytochrome b5] + 3 O2 + 5 H(+) = 4alpha-carboxy-5alpha-cholest-7-en-3beta-ol + 6 Fe(III)-[cytochrome b5] + 4 H2O. It catalyses the reaction 4,4-dimethyl-5alpha-cholest-8-en-3beta-ol + 6 Fe(II)-[cytochrome b5] + 3 O2 + 5 H(+) = 4alpha-carboxy-4beta-methyl-5alpha-cholest-8-en-3beta-ol + 6 Fe(III)-[cytochrome b5] + 4 H2O. The enzyme catalyses 4alpha-methyl-5alpha-cholest-8-en-3beta-ol + 6 Fe(II)-[cytochrome b5] + 3 O2 + 5 H(+) = 4alpha-carboxy-5alpha-cholest-8-ene-3beta-ol + 6 Fe(III)-[cytochrome b5] + 4 H2O. It functions in the pathway steroid biosynthesis; zymosterol biosynthesis; zymosterol from lanosterol: step 3/6. Its pathway is steroid biosynthesis; cholesterol biosynthesis. Its function is as follows. Catalyzes the three-step monooxygenation required for the demethylation of 4,4-dimethyl and 4alpha-methylsterols, which can be subsequently metabolized to cholesterol. The polypeptide is Methylsterol monooxygenase 1 (MSMO1) (Pongo abelii (Sumatran orangutan)).